Here is a 738-residue protein sequence, read N- to C-terminus: uncharacterized protein (738 aa).

Positions 1–10 (MQKKVVQSAS) are enriched in polar residues. 3 disordered regions span residues 1–23 (MQKK…KRSS), 53–83 (EGTH…NPNP), and 219–266 (HQDG…PLST). Low complexity predominate over residues 55–77 (THSASVHPSTSSTSHISSPSAFS). Positions 246 to 266 (GSPSPNRSLNVSNNTTPPLST) are enriched in polar residues. 2 positions are modified to phosphothreonine: Thr260 and Thr261. A DNA-binding region (zn(2)-C6 fungal-type) is located at residues 292 to 318 (CAKCQKDNKKCDDARPCQRCIKAKTDC). Residues 323-335 (RKKRPTGVRRGPY) show a composition bias toward basic residues. Disordered stretches follow at residues 323–372 (RKKR…SDNQ) and 441–464 (DETG…SFTN). Over residues 340-352 (DTSNNTKSTTASS) the composition is skewed to low complexity. The segment covering 353–372 (GHSTQDSLSSKMLDPSSDNQ) has biased composition (polar residues).

It is found in the cytoplasm. It localises to the nucleus. This is an uncharacterized protein from Schizosaccharomyces pombe (strain 972 / ATCC 24843) (Fission yeast).